A 100-amino-acid chain; its full sequence is Urease subunit gamma (100 aa).

This sequence belongs to the urease gamma subunit family. In terms of assembly, heterotrimer of UreA (gamma), UreB (beta) and UreC (alpha) subunits. Three heterotrimers associate to form the active enzyme.

The protein resides in the cytoplasm. It carries out the reaction urea + 2 H2O + H(+) = hydrogencarbonate + 2 NH4(+). The protein operates within nitrogen metabolism; urea degradation; CO(2) and NH(3) from urea (urease route): step 1/1. This chain is Urease subunit gamma, found in Lysinibacillus sphaericus (strain C3-41).